The following is a 319-amino-acid chain: MSLNFLDFEQPIAELEAKIDSLTAVSRQDEKLDINLDEEVQRLREKSVELTRKIFADLGAWQVAQLARHPQRPYTLDYIKHIFTDFDELAGDRAYADDKAIVGGIARLDGRPVMIIGHQKGRETKEKIRRNFGMPAPEGYRKALRLMEMADRFRMPIITFIDTPGAYPGVGAEERGQSEAIARNLREMSTLRVPIICTVIGEGGSGGALAIGVGDKVNMLQYSTYSVISPEGCASILWKSADKAPLAAEAMGIIAPRLKELKLIDTVIPEPLGSAHRNVPVMAASLKAQLLADLLDLEGLSEEALLNRRYQRLMNYGYC.

Residues 35–296 enclose the CoA carboxyltransferase C-terminal domain; the sequence is NLDEEVQRLR…KAQLLADLLD (262 aa).

Belongs to the AccA family. In terms of assembly, acetyl-CoA carboxylase is a heterohexamer composed of biotin carboxyl carrier protein (AccB), biotin carboxylase (AccC) and two subunits each of ACCase subunit alpha (AccA) and ACCase subunit beta (AccD).

The protein resides in the cytoplasm. The enzyme catalyses N(6)-carboxybiotinyl-L-lysyl-[protein] + acetyl-CoA = N(6)-biotinyl-L-lysyl-[protein] + malonyl-CoA. The protein operates within lipid metabolism; malonyl-CoA biosynthesis; malonyl-CoA from acetyl-CoA: step 1/1. Its function is as follows. Component of the acetyl coenzyme A carboxylase (ACC) complex. First, biotin carboxylase catalyzes the carboxylation of biotin on its carrier protein (BCCP) and then the CO(2) group is transferred by the carboxyltransferase to acetyl-CoA to form malonyl-CoA. The sequence is that of Acetyl-coenzyme A carboxylase carboxyl transferase subunit alpha from Pectobacterium atrosepticum (strain SCRI 1043 / ATCC BAA-672) (Erwinia carotovora subsp. atroseptica).